Reading from the N-terminus, the 355-residue chain is Uroporphyrinogen decarboxylase (355 aa).

Substrate is bound by residues 27–31, Asp-77, Tyr-154, Thr-209, and His-327; that span reads RQAGR.

Belongs to the uroporphyrinogen decarboxylase family. In terms of assembly, homodimer.

The protein resides in the cytoplasm. It carries out the reaction uroporphyrinogen III + 4 H(+) = coproporphyrinogen III + 4 CO2. It participates in porphyrin-containing compound metabolism; protoporphyrin-IX biosynthesis; coproporphyrinogen-III from 5-aminolevulinate: step 4/4. Catalyzes the decarboxylation of four acetate groups of uroporphyrinogen-III to yield coproporphyrinogen-III. The chain is Uroporphyrinogen decarboxylase from Erwinia tasmaniensis (strain DSM 17950 / CFBP 7177 / CIP 109463 / NCPPB 4357 / Et1/99).